The following is a 174-amino-acid chain: ATP-dependent protease subunit HslV (174 aa).

T2 is a catalytic residue. Na(+)-binding residues include G157, C160, and T163.

Belongs to the peptidase T1B family. HslV subfamily. As to quaternary structure, a double ring-shaped homohexamer of HslV is capped on each side by a ring-shaped HslU homohexamer. The assembly of the HslU/HslV complex is dependent on binding of ATP.

It localises to the cytoplasm. The enzyme catalyses ATP-dependent cleavage of peptide bonds with broad specificity.. Its activity is regulated as follows. Allosterically activated by HslU binding. Its function is as follows. Protease subunit of a proteasome-like degradation complex believed to be a general protein degrading machinery. This chain is ATP-dependent protease subunit HslV, found in Shewanella oneidensis (strain ATCC 700550 / JCM 31522 / CIP 106686 / LMG 19005 / NCIMB 14063 / MR-1).